The chain runs to 301 residues: Leucine-rich repeat-containing protein 30 (301 aa).

9 LRR repeats span residues 72 to 93 (EVQK…VGKL), 95 to 116 (RIVV…VSLL), 118 to 139 (CLKV…LSLC), 141 to 163 (KLEV…ADLS), 164 to 185 (RLRK…VFSL), 187 to 208 (ELIF…IQHL), 210 to 231 (SLQI…LCLV), 233 to 254 (SLEL…LHLL), and 265 to 287 (MDKG…VEGG).

In Homo sapiens (Human), this protein is Leucine-rich repeat-containing protein 30 (LRRC30).